Consider the following 292-residue polypeptide: 4-hydroxy-tetrahydrodipicolinate synthase (292 aa).

Pyruvate is bound at residue threonine 45. Residue tyrosine 133 is the Proton donor/acceptor of the active site. The active-site Schiff-base intermediate with substrate is lysine 161. A pyruvate-binding site is contributed by isoleucine 203.

The protein belongs to the DapA family. In terms of assembly, homotetramer; dimer of dimers.

The protein localises to the cytoplasm. It catalyses the reaction L-aspartate 4-semialdehyde + pyruvate = (2S,4S)-4-hydroxy-2,3,4,5-tetrahydrodipicolinate + H2O + H(+). Its pathway is amino-acid biosynthesis; L-lysine biosynthesis via DAP pathway; (S)-tetrahydrodipicolinate from L-aspartate: step 3/4. Its function is as follows. Catalyzes the condensation of (S)-aspartate-beta-semialdehyde [(S)-ASA] and pyruvate to 4-hydroxy-tetrahydrodipicolinate (HTPA). This is 4-hydroxy-tetrahydrodipicolinate synthase from Salmonella paratyphi A (strain AKU_12601).